The following is an 88-amino-acid chain: uncharacterized protein (88 aa).

As to expression, expressed in a wide variety of tissues.

This is an uncharacterized protein from Homo sapiens (Human).